We begin with the raw amino-acid sequence, 125 residues long: Meiotically up-regulated gene 112 protein (125 aa).

It localises to the golgi apparatus. Its function is as follows. Has a role in meiosis. The polypeptide is Meiotically up-regulated gene 112 protein (mug112) (Schizosaccharomyces pombe (strain 972 / ATCC 24843) (Fission yeast)).